A 413-amino-acid chain; its full sequence is Queuine tRNA-ribosyltransferase accessory subunit 2 (413 aa).

A disordered region spans residues 298–321; sequence LEKSETSGAERNGDVGAESEEPDA. 4 residues coordinate Zn(2+): cysteine 349, cysteine 351, cysteine 354, and histidine 380.

This sequence belongs to the queuine tRNA-ribosyltransferase family. QTRT2 subfamily. In terms of assembly, heterodimer of a catalytic subunit qtrt1 and an accessory subunit qtrt2. Zn(2+) is required as a cofactor.

It localises to the cytoplasm. It is found in the mitochondrion outer membrane. Non-catalytic subunit of the queuine tRNA-ribosyltransferase (TGT) that catalyzes the base-exchange of a guanine (G) residue with queuine (Q) at position 34 (anticodon wobble position) in tRNAs with GU(N) anticodons (tRNA-Asp, -Asn, -His and -Tyr), resulting in the hypermodified nucleoside queuosine (7-(((4,5-cis-dihydroxy-2-cyclopenten-1-yl)amino)methyl)-7-deazaguanosine). The sequence is that of Queuine tRNA-ribosyltransferase accessory subunit 2 from Xenopus tropicalis (Western clawed frog).